Consider the following 429-residue polypeptide: Glutamyl-tRNA reductase (429 aa).

Substrate is bound by residues 50–53, Ser116, 121–123, and Gln127; these read TCNR and EPQ. Residue Cys51 is the Nucleophile of the active site. NADP(+) is bound at residue 196–201; the sequence is GAGEMA.

Belongs to the glutamyl-tRNA reductase family. As to quaternary structure, homodimer.

It catalyses the reaction (S)-4-amino-5-oxopentanoate + tRNA(Glu) + NADP(+) = L-glutamyl-tRNA(Glu) + NADPH + H(+). Its pathway is porphyrin-containing compound metabolism; protoporphyrin-IX biosynthesis; 5-aminolevulinate from L-glutamyl-tRNA(Glu): step 1/2. Functionally, catalyzes the NADPH-dependent reduction of glutamyl-tRNA(Glu) to glutamate 1-semialdehyde (GSA). The sequence is that of Glutamyl-tRNA reductase from Thermodesulfovibrio yellowstonii (strain ATCC 51303 / DSM 11347 / YP87).